The sequence spans 300 residues: Ribosomal protein L11 methyltransferase (300 aa).

The S-adenosyl-L-methionine site is built by Thr152, Gly173, Asp195, and Asn234.

Belongs to the methyltransferase superfamily. PrmA family.

The protein localises to the cytoplasm. It catalyses the reaction L-lysyl-[protein] + 3 S-adenosyl-L-methionine = N(6),N(6),N(6)-trimethyl-L-lysyl-[protein] + 3 S-adenosyl-L-homocysteine + 3 H(+). Functionally, methylates ribosomal protein L11. The chain is Ribosomal protein L11 methyltransferase from Burkholderia thailandensis (strain ATCC 700388 / DSM 13276 / CCUG 48851 / CIP 106301 / E264).